The following is a 371-amino-acid chain: ATP-dependent protease ATP-binding subunit-like protein AmiB (371 aa).

Residue 96-103 participates in ATP binding; that stretch reads GPTGVGKT.

Belongs to the ClpX chaperone family. Mg(2+) serves as cofactor.

Functionally, unlikely to encode a regulatory protein. Has ATPase activity. AmiB and AmiS may act jointly into a two component ABC transporter system. The chain is ATP-dependent protease ATP-binding subunit-like protein AmiB (amiB) from Pseudomonas aeruginosa (strain ATCC 15692 / DSM 22644 / CIP 104116 / JCM 14847 / LMG 12228 / 1C / PRS 101 / PAO1).